A 217-amino-acid chain; its full sequence is Large ribosomal subunit protein uL4 (217 aa).

Residues 46-102 (KRQGTHSAKTRAEVSGGGRKPFRQKGTGRARQGSIRAPHFTGGGISHGPKPRDYSQR) are disordered.

Belongs to the universal ribosomal protein uL4 family. In terms of assembly, part of the 50S ribosomal subunit.

In terms of biological role, one of the primary rRNA binding proteins, this protein initially binds near the 5'-end of the 23S rRNA. It is important during the early stages of 50S assembly. It makes multiple contacts with different domains of the 23S rRNA in the assembled 50S subunit and ribosome. Forms part of the polypeptide exit tunnel. This Corynebacterium diphtheriae (strain ATCC 700971 / NCTC 13129 / Biotype gravis) protein is Large ribosomal subunit protein uL4.